We begin with the raw amino-acid sequence, 102 residues long: Complement inhibitor RaCI6 (102 aa).

Positions 1-24 (MAALNGLVLLLLTISAMFISECYS) are cleaved as a signal peptide. Intrachain disulfides connect C37–C61 and C42–C63.

Belongs to the RaCI family. As to expression, expressed in salivary glands.

The protein resides in the secreted. Its function is as follows. Complement inhibitor. Prevents complement-mediated C5 activation by binding to C5. Binds C5 at a different binding site than the other tick complement inhibitors OmCI and CirpT1, and the drug eculizumab. The sequence is that of Complement inhibitor RaCI6 from Dermacentor andersoni (Rocky mountain wood tick).